Here is a 536-residue protein sequence, read N- to C-terminus: Anthranilate synthase component 1 2 (536 aa).

L-tryptophan is bound by residues Ser59 and Pro299–Met301. Gly334–Thr335 provides a ligand contact to chorismate. Position 361 (Glu361) interacts with Mg(2+). Chorismate contacts are provided by residues Tyr449, Arg469, Gly487–Gly489, and Gly489. Position 502 (Glu502) interacts with Mg(2+).

The protein belongs to the anthranilate synthase component I family. As to quaternary structure, tetramer of two components I and two components II. Mg(2+) serves as cofactor.

It catalyses the reaction chorismate + L-glutamine = anthranilate + pyruvate + L-glutamate + H(+). The protein operates within amino-acid biosynthesis; L-tryptophan biosynthesis; L-tryptophan from chorismate: step 1/5. The protein is Anthranilate synthase component 1 2 (trpE2) of Haloarcula marismortui (strain ATCC 43049 / DSM 3752 / JCM 8966 / VKM B-1809) (Halobacterium marismortui).